The sequence spans 232 residues: Flagellar L-ring protein (232 aa).

A signal peptide spans 1 to 15 (MKKVLFYVLPFAFFG). C16 carries N-palmitoyl cysteine lipidation. C16 is lipidated: S-diacylglycerol cysteine.

Belongs to the FlgH family. In terms of assembly, the basal body constitutes a major portion of the flagellar organelle and consists of four rings (L,P,S, and M) mounted on a central rod.

The protein localises to the cell outer membrane. The protein resides in the bacterial flagellum basal body. In terms of biological role, assembles around the rod to form the L-ring and probably protects the motor/basal body from shearing forces during rotation. In Campylobacter jejuni subsp. jejuni serotype O:23/36 (strain 81-176), this protein is Flagellar L-ring protein.